The primary structure comprises 285 residues: MSWDDEDFDIPSNSKKTVAASWEDEEDDGPVLESWDVDPEEEEKKKKEAKLQEAKRKAELKAKEDAEKAKKDAKRKELEQFDQLDERTRKELLKKAELNADLNNAADLFGGLGVADDNDDDDFDINEHPRERITKQQLAAAAASKRPALTKDTPLEEHPLFQPTNKQEYEKLRKTVGTSLTRLNEDSSLLYASSLAVDLIRDLSQPLSVENLRKVISTLNVVIKDKERQERQARLKKAGGTATGGAGKKKAKPLARPNVGGGFKKDAFDDMDDGQFDDLDDDDFM.

Disordered regions lie at residues Met1–Glu86 and Gln232–Met285. The segment covering Trp22–Glu41 has biased composition (acidic residues). A coiled-coil region spans residues Asp36 to Phe81. Basic and acidic residues predominate over residues Glu42–Glu86. The segment covering Asp269–Met285 has biased composition (acidic residues).

The protein belongs to the eIF-3 subunit J family. In terms of assembly, component of the eukaryotic translation initiation factor 3 (eIF-3) complex.

The protein resides in the cytoplasm. In terms of biological role, component of the eukaryotic translation initiation factor 3 (eIF-3) complex, which is involved in protein synthesis of a specialized repertoire of mRNAs and, together with other initiation factors, stimulates binding of mRNA and methionyl-tRNAi to the 40S ribosome. The eIF-3 complex specifically targets and initiates translation of a subset of mRNAs involved in cell proliferation. The chain is Eukaryotic translation initiation factor 3 subunit J from Candida albicans (strain SC5314 / ATCC MYA-2876) (Yeast).